The primary structure comprises 341 residues: 33 kDa chaperonin (341 aa).

2 disulfides stabilise this stretch: Cys245-Cys247 and Cys278-Cys281.

It belongs to the HSP33 family. Post-translationally, under oxidizing conditions two disulfide bonds are formed involving the reactive cysteines. Under reducing conditions zinc is bound to the reactive cysteines and the protein is inactive.

It is found in the cytoplasm. Its function is as follows. Redox regulated molecular chaperone. Protects both thermally unfolding and oxidatively damaged proteins from irreversible aggregation. Plays an important role in the bacterial defense system toward oxidative stress. This Thermus thermophilus (strain ATCC BAA-163 / DSM 7039 / HB27) protein is 33 kDa chaperonin.